The chain runs to 239 residues: Large ribosomal subunit protein mL67 (239 aa).

This sequence belongs to the mitochondrion-specific ribosomal protein mL67 family. As to quaternary structure, component of the mitochondrial large ribosomal subunit (mt-LSU).

It is found in the nucleus. The protein resides in the mitochondrion. In terms of biological role, component of the mitochondrial ribosome (mitoribosome), a dedicated translation machinery responsible for the synthesis of mitochondrial genome-encoded proteins, including at least some of the essential transmembrane subunits of the mitochondrial respiratory chain. The mitoribosomes are attached to the mitochondrial inner membrane and translation products are cotranslationally integrated into the membrane. mL67/MHR1 also has extraribosomal functions, being involved in regulation of mitochondrial DNA recombination, maintenance and repair, and generation of homoplasmic cells. mL67/MHR1 also acts as transcription factor involved in regulation of RNA polymerase II-dependent transcription. This Candida albicans (strain SC5314 / ATCC MYA-2876) (Yeast) protein is Large ribosomal subunit protein mL67 (MHR1).